A 175-amino-acid chain; its full sequence is Thermoresistant gluconokinase (175 aa).

ATP is bound at residue 15–22 (GVSGSGKS).

The protein belongs to the gluconokinase GntK/GntV family.

It carries out the reaction D-gluconate + ATP = 6-phospho-D-gluconate + ADP + H(+). It participates in carbohydrate acid metabolism; D-gluconate degradation. The sequence is that of Thermoresistant gluconokinase (gntK) from Escherichia coli (strain K12).